We begin with the raw amino-acid sequence, 260 residues long: Triosephosphate isomerase (260 aa).

11 to 13 (NWK) provides a ligand contact to substrate. H103 functions as the Electrophile in the catalytic mechanism. E175 functions as the Proton acceptor in the catalytic mechanism. Residues G181, S220, and 241 to 242 (GG) contribute to the substrate site.

It belongs to the triosephosphate isomerase family. As to quaternary structure, homodimer.

It localises to the cytoplasm. The enzyme catalyses D-glyceraldehyde 3-phosphate = dihydroxyacetone phosphate. It functions in the pathway carbohydrate biosynthesis; gluconeogenesis. It participates in carbohydrate degradation; glycolysis; D-glyceraldehyde 3-phosphate from glycerone phosphate: step 1/1. Involved in the gluconeogenesis. Catalyzes stereospecifically the conversion of dihydroxyacetone phosphate (DHAP) to D-glyceraldehyde-3-phosphate (G3P). The protein is Triosephosphate isomerase of Shewanella sp. (strain W3-18-1).